Reading from the N-terminus, the 154-residue chain is Thioredoxin-like protein CXXS2 (154 aa).

Positions 23-148 (RRNKTQARSQ…LQKKTAAAAN (126 aa)) constitute a Thioredoxin domain. Serine 31 bears the Phosphoserine mark.

Belongs to the thioredoxin family. In terms of tissue distribution, ubiquitous.

The protein localises to the cytoplasm. Possesses low disulfide reductase activity, but efficient protein disulfide isomerase activity. Does not possess deglutathionylation activity. This is Thioredoxin-like protein CXXS2 (CXXS2) from Arabidopsis thaliana (Mouse-ear cress).